Here is an 832-residue protein sequence, read N- to C-terminus: Protein P (832 aa).

The tract at residues 1–177 is terminal protein domain (TP); the sequence is MPLSYQHFRR…FCGSPYSWEQ (177 aa). A spacer region spans residues 178 to 335; sequence KLQHGAESFH…YCLSHIVNLL (158 aa). 2 disordered regions span residues 186–229 and 275–305; these read FHQQ…QGRS and YPTV…RSQS. Positions 336–679 are polymerase/reverse transcriptase domain (RT); that stretch reads EDWGPCTEHG…YMNLYPVARQ (344 aa). One can recognise a Reverse transcriptase domain in the interval 346–589; the sequence is EHHIRIPRTP…YSLHFMGYVI (244 aa). Residues D418, D540, and D541 each contribute to the Mg(2+) site.

It belongs to the hepadnaviridae P protein family.

The catalysed reaction is DNA(n) + a 2'-deoxyribonucleoside 5'-triphosphate = DNA(n+1) + diphosphate. It catalyses the reaction Endonucleolytic cleavage to 5'-phosphomonoester.. Its activity is regulated as follows. Activated by host HSP70 and HSP40 in vitro to be able to bind the epsilon loop of the pgRNA. Because deletion of the RNase H region renders the protein partly chaperone-independent, the chaperones may be needed indirectly to relieve occlusion of the RNA-binding site by this domain. Inhibited by several reverse-transcriptase inhibitors: Lamivudine, Adefovir and Entecavir. Functionally, multifunctional enzyme that converts the viral RNA genome into dsDNA in viral cytoplasmic capsids. This enzyme displays a DNA polymerase activity that can copy either DNA or RNA templates, and a ribonuclease H (RNase H) activity that cleaves the RNA strand of RNA-DNA heteroduplexes in a partially processive 3'- to 5'-endonucleasic mode. Neo-synthesized pregenomic RNA (pgRNA) are encapsidated together with the P protein, and reverse-transcribed inside the nucleocapsid. Initiation of reverse-transcription occurs first by binding the epsilon loop on the pgRNA genome, and is initiated by protein priming, thereby the 5'-end of (-)DNA is covalently linked to P protein. Partial (+)DNA is synthesized from the (-)DNA template and generates the relaxed circular DNA (RC-DNA) genome. After budding and infection, the RC-DNA migrates in the nucleus, and is converted into a plasmid-like covalently closed circular DNA (cccDNA). The activity of P protein does not seem to be necessary for cccDNA generation, and is presumably released from (+)DNA by host nuclear DNA repair machinery. The sequence is that of Protein P from Homo sapiens (Human).